We begin with the raw amino-acid sequence, 438 residues long: MSTATMPYVAFKVKDISLAAWGRKEIELAEAEMPGLMALRAEYKNEQPLAGARIAGCLHMTIQTAVLIETLIALGAEVTWSSCNIFSTQDQAAAAIAAAGIQVYAWKGLNEPDFDWCIEQTLFFGEDRKPLNMILDDGGDLTNMVIDRYPHLVEGIKGLSEETTTGVHRLYERVKAGTLPMPAINVNDSVTKSKFDNKYGCKESAVDAVRRATDIMLAGKRVVVCGYGDVGKGTAASFRGAGSIVTVTEIDPICALQAAMDGFEVKKLNTVVGNADIIITTTGNKDIVLGSHFEQMKDKTIVCNIGHFDNEIDMAWLNKNHGASKIEIKPQVDKYTIAGKDILILAEGRLVNLGCATGHPSFVMSNSFTNQTLAQIELWKNSAAYNNDVYMLPKHLDEKVAFLHLAKLGVELEVLRDDQAAYIGVGVDGPFKPEYYRY.

Residues Thr61, Asp137, and Glu162 each contribute to the substrate site. 163–165 (TTT) provides a ligand contact to NAD(+). 2 residues coordinate substrate: Lys192 and Asp196. Residues Asn197, 226-231 (GYGDVG), Glu249, Asn284, 305-307 (IGH), and Asn352 contribute to the NAD(+) site.

The protein belongs to the adenosylhomocysteinase family. NAD(+) serves as cofactor.

It localises to the cytoplasm. It catalyses the reaction S-adenosyl-L-homocysteine + H2O = L-homocysteine + adenosine. The protein operates within amino-acid biosynthesis; L-homocysteine biosynthesis; L-homocysteine from S-adenosyl-L-homocysteine: step 1/1. In terms of biological role, may play a key role in the regulation of the intracellular concentration of adenosylhomocysteine. The protein is Adenosylhomocysteinase of Flavobacterium psychrophilum (strain ATCC 49511 / DSM 21280 / CIP 103535 / JIP02/86).